The following is a 317-amino-acid chain: MGEVQREKVAVIIGPTAVGKTKLSIDLAKALNGEIISGDSMQIYRTMDIGTAKVTKEEMDGIPHYMVDIKNPEESFSVAEFQERVRKHIREITERGKLPIIVGGTGLYIQSVLFDYQFTDDAGDAIYREQMEKLALERGVEYVHKKLQEVDPESAERIHANNVRRVIRALEIFHTTGEKMSDQLEKQENELLYDVSLIGLTMDREMLYDRINLRVDIMMDQGLLEEVEGLYNRGIRDCQSIQAIGYKEIYDYFEDRVSLEEAVSQLKTNSRRYAKRQLTWFRNKMDVTWFDVTDGEKTSEILRYIEGKLQRKSNNSK.

Position 14–21 (14–21) interacts with ATP; the sequence is GPTAVGKT. 16–21 is a binding site for substrate; it reads TAVGKT. The interval 39–42 is interaction with substrate tRNA; sequence DSMQ.

This sequence belongs to the IPP transferase family. In terms of assembly, monomer. It depends on Mg(2+) as a cofactor.

The enzyme catalyses adenosine(37) in tRNA + dimethylallyl diphosphate = N(6)-dimethylallyladenosine(37) in tRNA + diphosphate. Functionally, catalyzes the transfer of a dimethylallyl group onto the adenine at position 37 in tRNAs that read codons beginning with uridine, leading to the formation of N6-(dimethylallyl)adenosine (i(6)A). In Bacillus cereus (strain AH187), this protein is tRNA dimethylallyltransferase.